The sequence spans 167 residues: SsrA-binding protein (167 aa).

The interval 139-167 (QAHDKRHAEKEREWQRDKQRIMRAHNRNA) is disordered. Over residues 144-158 (RHAEKEREWQRDKQR) the composition is skewed to basic and acidic residues.

Belongs to the SmpB family.

Its subcellular location is the cytoplasm. Its function is as follows. Required for rescue of stalled ribosomes mediated by trans-translation. Binds to transfer-messenger RNA (tmRNA), required for stable association of tmRNA with ribosomes. tmRNA and SmpB together mimic tRNA shape, replacing the anticodon stem-loop with SmpB. tmRNA is encoded by the ssrA gene; the 2 termini fold to resemble tRNA(Ala) and it encodes a 'tag peptide', a short internal open reading frame. During trans-translation Ala-aminoacylated tmRNA acts like a tRNA, entering the A-site of stalled ribosomes, displacing the stalled mRNA. The ribosome then switches to translate the ORF on the tmRNA; the nascent peptide is terminated with the 'tag peptide' encoded by the tmRNA and targeted for degradation. The ribosome is freed to recommence translation, which seems to be the essential function of trans-translation. This is SsrA-binding protein from Xylella fastidiosa (strain M23).